A 154-amino-acid polypeptide reads, in one-letter code: UPF0178 protein H16_B0290 (154 aa).

Belongs to the UPF0178 family.

This Cupriavidus necator (strain ATCC 17699 / DSM 428 / KCTC 22496 / NCIMB 10442 / H16 / Stanier 337) (Ralstonia eutropha) protein is UPF0178 protein H16_B0290.